A 950-amino-acid polypeptide reads, in one-letter code: Nonsense-mediated mRNA decay factor SMG8 (950 aa).

2 disordered regions span residues 560 to 607 (HTGK…LSPT) and 624 to 651 (NESQ…ADTE). A compositionally biased stretch (acidic residues) spans 568-582 (QDEDGEEDAEDEEGQ). Residues 593–607 (QNTASNGCSQPLSPT) are compositionally biased toward polar residues. Residues 624 to 648 (NESQASSEQLSNSEQNSTSSGTSSA) are compositionally biased toward low complexity.

This sequence belongs to the SMG8 family.

Involved in nonsense-mediated decay (NMD) of mRNAs containing premature stop codons. Probable component of kinase complex containing nonC and recruited to stalled ribosomes. The sequence is that of Nonsense-mediated mRNA decay factor SMG8 from Drosophila yakuba (Fruit fly).